The primary structure comprises 67 residues: DNA-directed RNA polymerase subunit omega (67 aa).

This sequence belongs to the RNA polymerase subunit omega family. The RNAP catalytic core consists of 2 alpha, 1 beta, 1 beta' and 1 omega subunit. When a sigma factor is associated with the core the holoenzyme is formed, which can initiate transcription.

It carries out the reaction RNA(n) + a ribonucleoside 5'-triphosphate = RNA(n+1) + diphosphate. In terms of biological role, promotes RNA polymerase assembly. Latches the N- and C-terminal regions of the beta' subunit thereby facilitating its interaction with the beta and alpha subunits. This chain is DNA-directed RNA polymerase subunit omega, found in Ralstonia pickettii (strain 12J).